The primary structure comprises 289 residues: MAAETASGYIQHHLQNLTFGRLPNGDWGFAHTAEQAKEMGFWAFHVDTLGWSVLLGVVFLFIFRLAAKKATSGQPGGLQNFVEVMVEFVDTSVKDTFHGRNPLIAPLALTVFVWIFLLNLIDLVPVDYLPMLAAKITGDEHLFFRAVATTDPNATLGLSISVFALIVFYSIKVKGIGGFLGELTLHPFSSKNIVVQILLIPVNFLLEFVTLIAKPVSLALRLFGNMYAGELIFILIAVMFGSGMFLLSALGVALNWAWAVFHILIITLQAFIFMMLTIVYLSMAHEDNH.

The next 6 helical transmembrane spans lie at 43-63 (AFHV…LFIF), 104-124 (IAPL…IDLV), 160-180 (ISVF…GGFL), 193-213 (IVVQ…TLIA), 232-252 (IFIL…ALGV), and 259-279 (AVFH…LTIV).

Belongs to the ATPase A chain family. F-type ATPases have 2 components, CF(1) - the catalytic core - and CF(0) - the membrane proton channel. CF(1) has five subunits: alpha(3), beta(3), gamma(1), delta(1), epsilon(1). CF(0) has three main subunits: a(1), b(2) and c(9-12). The alpha and beta chains form an alternating ring which encloses part of the gamma chain. CF(1) is attached to CF(0) by a central stalk formed by the gamma and epsilon chains, while a peripheral stalk is formed by the delta and b chains.

Its subcellular location is the cell inner membrane. Key component of the proton channel; it plays a direct role in the translocation of protons across the membrane. This chain is ATP synthase subunit a, found in Pseudomonas paraeruginosa (strain DSM 24068 / PA7) (Pseudomonas aeruginosa (strain PA7)).